Here is a 290-residue protein sequence, read N- to C-terminus: 33 kDa chaperonin (290 aa).

2 cysteine pairs are disulfide-bonded: Cys235–Cys237 and Cys268–Cys271.

This sequence belongs to the HSP33 family. In terms of processing, under oxidizing conditions two disulfide bonds are formed involving the reactive cysteines. Under reducing conditions zinc is bound to the reactive cysteines and the protein is inactive.

The protein localises to the cytoplasm. Its function is as follows. Redox regulated molecular chaperone. Protects both thermally unfolding and oxidatively damaged proteins from irreversible aggregation. Plays an important role in the bacterial defense system toward oxidative stress. The polypeptide is 33 kDa chaperonin (Streptococcus equi subsp. equi (strain 4047)).